We begin with the raw amino-acid sequence, 237 residues long: Concanavalin-A (237 aa).

E8 and D10 together coordinate Mn(2+). Residues D10, Y12, N14, and D19 each contribute to the Ca(2+) site. Y12 contacts a carbohydrate. Positions 19 and 24 each coordinate Mn(2+). L99 to Y100 contacts a carbohydrate. D208 serves as a coordination point for Ca(2+). R228 contacts a carbohydrate.

This sequence belongs to the leguminous lectin family. As to quaternary structure, homotetramer.

Glucose/D-mannose specific lectin. The chain is Concanavalin-A from Canavalia lineata (Beach bean).